The primary structure comprises 493 residues: MIPTQPLTADLDCDLGLERPDRPEEACGVFALYAPGEEVARMAYFGLYALQHRGQESAGIAVFEGDRVMLHKDMGLVSQVFDPEILQQLQGSLAVGHTRYSTTGSSRIANAQPALLETRLGPVALAHNGNLVNTVELRQELLAKNHELTTTTDSELIAFAIMEAVAEGQDWRGAIESACRRSQGAFSLTIGTPEALYGTRDPNGIRPLVLGTLESNGQTRYVLSSETCGLDIIGADYVRDIAPGEMVRITDAGLESWTWAEAPQPKLCVFEMIYFARPDSLFHGESLYSYRRRIGQRLAKEAPADVDLVLGVPDSGIPAAIGFSEALGIPYAEGLIKNRYVGRTFIQPTQSMRETGIRMKLNPLKDVLAGKRIAIIDDSIVRGTTSRKLVKALRDAGATEVHMRISSPPVTHPCFYGIDTDTQDQLIAATRSVSEITEQIGVDSLAYLTEQGMLEATRESIGNFCTACFNGRYPIAIPEEIKRSKLMLETVTA.

A propeptide spanning residues 1-26 (MIPTQPLTADLDCDLGLERPDRPEEA) is cleaved from the precursor. Cysteine 27 functions as the Nucleophile in the catalytic mechanism. In terms of domain architecture, Glutamine amidotransferase type-2 spans 27 to 252 (CGVFALYAPG…PGEMVRITDA (226 aa)). Cysteine 268 contacts [4Fe-4S] cluster. Positions 315, 377, and 378 each coordinate Mg(2+). Residues cysteine 414, cysteine 465, and cysteine 468 each coordinate [4Fe-4S] cluster.

In the C-terminal section; belongs to the purine/pyrimidine phosphoribosyltransferase family. Mg(2+) serves as cofactor. The cofactor is [4Fe-4S] cluster.

It carries out the reaction 5-phospho-beta-D-ribosylamine + L-glutamate + diphosphate = 5-phospho-alpha-D-ribose 1-diphosphate + L-glutamine + H2O. The protein operates within purine metabolism; IMP biosynthesis via de novo pathway; N(1)-(5-phospho-D-ribosyl)glycinamide from 5-phospho-alpha-D-ribose 1-diphosphate: step 1/2. Functionally, catalyzes the formation of phosphoribosylamine from phosphoribosylpyrophosphate (PRPP) and glutamine. In Synechococcus elongatus (strain ATCC 33912 / PCC 7942 / FACHB-805) (Anacystis nidulans R2), this protein is Amidophosphoribosyltransferase.